Here is a 336-residue protein sequence, read N- to C-terminus: Tyrosine recombinase XerC (336 aa).

One can recognise a Core-binding (CB) domain in the interval 14–106 (VANCRWLGEF…SVKSFYRFLL (93 aa)). One can recognise a Tyr recombinase domain in the interval 127 to 330 (KIPDFLSEEE…TFNRLRDAYT (204 aa)). Residues R183, K207, H282, R285, and H308 contribute to the active site. Y317 serves as the catalytic O-(3'-phospho-DNA)-tyrosine intermediate.

The protein belongs to the 'phage' integrase family. XerC subfamily. Forms a cyclic heterotetrameric complex composed of two molecules of XerC and two molecules of XerD.

Its subcellular location is the cytoplasm. In terms of biological role, site-specific tyrosine recombinase, which acts by catalyzing the cutting and rejoining of the recombining DNA molecules. The XerC-XerD complex is essential to convert dimers of the bacterial chromosome into monomers to permit their segregation at cell division. It also contributes to the segregational stability of plasmids. The sequence is that of Tyrosine recombinase XerC from Chlorobaculum tepidum (strain ATCC 49652 / DSM 12025 / NBRC 103806 / TLS) (Chlorobium tepidum).